The primary structure comprises 160 residues: 6,7-dimethyl-8-ribityllumazine synthase (160 aa).

5-amino-6-(D-ribitylamino)uracil-binding positions include Trp-27, 59–61 (AIE), and 81–83 (VVI). 86–87 (DT) contacts (2S)-2-hydroxy-3-oxobutyl phosphate. His-89 (proton donor) is an active-site residue. Asn-114 lines the 5-amino-6-(D-ribitylamino)uracil pocket. Arg-128 serves as a coordination point for (2S)-2-hydroxy-3-oxobutyl phosphate.

This sequence belongs to the DMRL synthase family. Homopentamer.

The enzyme catalyses (2S)-2-hydroxy-3-oxobutyl phosphate + 5-amino-6-(D-ribitylamino)uracil = 6,7-dimethyl-8-(1-D-ribityl)lumazine + phosphate + 2 H2O + H(+). The protein operates within cofactor biosynthesis; riboflavin biosynthesis; riboflavin from 2-hydroxy-3-oxobutyl phosphate and 5-amino-6-(D-ribitylamino)uracil: step 1/2. Functionally, catalyzes the formation of 6,7-dimethyl-8-ribityllumazine by condensation of 5-amino-6-(D-ribitylamino)uracil with 3,4-dihydroxy-2-butanone 4-phosphate. This is the penultimate step in the biosynthesis of riboflavin. This chain is 6,7-dimethyl-8-ribityllumazine synthase, found in Mycobacterium leprae (strain Br4923).